The chain runs to 394 residues: MAVLDLALQGLAIFGCVLFFVLWFMHFLSIVYTRLHLNKKVSDKQPYSKLPGVSLLKPLKGVDPNLINNLETFFELDYPKFEILLCVQDLDDPAVDVCKKLLGKYPSVDAKLFIGGKKVGINPKINNLMPGYEVAKYDLIWICDSGIKVKPDTLTDMANQMTEKVGLVHGLPYVADRQGFAATLEQVYFGTSHPRSYISANVTGFKCVTGMSCLMRKEVLDQAGGLIAFAQYIAEDYFMAKAIADRGWKFSMATQVAMQNSGCYSISQFQSRMIRWAKLRINMLPATIICEPISECFVASLIIGWAAHHIFRWDIMVFFMCHCLAWFIFDYIQLRGVQGGPLNFSKLDYAVAWFIRESMTIYIFLSALWDPTISWRTGRYRLRCGGTAEEILDV.

Residues 1–10 (MAVLDLALQG) are Lumenal-facing. Residues 11–32 (LAIFGCVLFFVLWFMHFLSIVY) traverse the membrane as a helical segment. The Cytoplasmic portion of the chain corresponds to 33–195 (TRLHLNKKVS…QVYFGTSHPR (163 aa)). Asp-92 is a short sequence motif (D1). A short sequence motif (D2) is located at residue Asp-144. Residues 196 to 215 (SYISANVTGFKCVTGMSCLM) form a helical membrane-spanning segment. Topologically, residues 216-287 (RKEVLDQAGG…KLRINMLPAT (72 aa)) are lumenal. Asp-236 is a short sequence motif (D3). Residue Asp-236 is the Proton acceptor of the active site. A (Q/R)XXRW motif is present at residues 272-276 (RMIRW). The chain crosses the membrane as a helical span at residues 288-304 (IICEPISECFVASLIIG). At 305-309 (WAAHH) the chain is on the cytoplasmic side. The chain crosses the membrane as a helical span at residues 310-328 (IFRWDIMVFFMCHCLAWFI). Over 329–348 (FDYIQLRGVQGGPLNFSKLD) the chain is Lumenal. Residues 349–369 (YAVAWFIRESMTIYIFLSALW) traverse the membrane as a helical segment. Residues 370 to 394 (DPTISWRTGRYRLRCGGTAEEILDV) lie on the Cytoplasmic side of the membrane.

The protein belongs to the glycosyltransferase 2 family.

It localises to the golgi apparatus membrane. It carries out the reaction an N-acylsphing-4-enine + UDP-alpha-D-glucose = a beta-D-glucosyl-(1&lt;-&gt;1')-N-acylsphing-4-enine + UDP + H(+). It catalyses the reaction UDP-alpha-D-xylose + an N-acylsphing-4-enine = a beta-D-xylosyl-(1&lt;-&gt;1')-N-acylsphing-4-enine + UDP + H(+). The catalysed reaction is N-(9Z-octadecenoyl)-sphing-4-enine + UDP-alpha-D-xylose = beta-D-xylosyl-(1&lt;-&gt;1')-N-(9Z-octadecenoyl)-sphing-4-enine + UDP + H(+). Its pathway is lipid metabolism; sphingolipid metabolism. Functionally, participates in the initial step of the glucosylceramide-based glycosphingolipid/GSL synthetic pathway at the cytosolic surface of the Golgi. Catalyzes the transfer of glucose from UDP-glucose to ceramide to produce glucosylceramide/GlcCer (such as beta-D-glucosyl-(1&lt;-&gt;1')-N-acylsphing-4-enine). Glucosylceramide is the core component of glycosphingolipids/GSLs, amphipathic molecules consisting of a ceramide lipid moiety embedded in the outer leaflet of the membrane, linked to one of hundreds of different externally oriented oligosaccharide structures. Glycosphingolipids are essential components of membrane microdomains that mediate membrane trafficking and signal transduction. They are implicated in many fundamental cellular processes, including growth, differentiation, migration, morphogenesis, cell-to-cell and cell-to-matrix interactions. Catalyzes the synthesis of xylosylceramide/XylCer (such as beta-D-xylosyl-(1&lt;-&gt;1')-N-acylsphing-4-enine) using UDP-Xyl as xylose donor. In Xenopus tropicalis (Western clawed frog), this protein is Ceramide glucosyltransferase (ugcg).